Reading from the N-terminus, the 260-residue chain is MGSILMATIKEVKEQLAILRDLDDPRWASFEEDSRTGVQAAIRKRRKAILAELAEEERLEILLNYEKSLYARGIELIAGVDEVGRGPLAGPVVAAAVILPKLCKIKGLNDSKKIPKSKHEAIYNQVMKEAVAVGIGIKDNYVIDDVNIYEATKLAMIEAIEKLNPQPEHLLIDAMNLDLPIEQTSIIKGDANSLSIAAASIVAKVTRDKMMADYEQEFPGYAFAKNAGYGTKEHLSGIDKFGVTPIHRRSFEPIKSIIKK.

Residues 75–260 (ELIAGVDEVG…FEPIKSIIKK (186 aa)) form the RNase H type-2 domain. D81, E82, and D173 together coordinate a divalent metal cation.

Belongs to the RNase HII family. The cofactor is Mn(2+). Mg(2+) is required as a cofactor.

The protein resides in the cytoplasm. The catalysed reaction is Endonucleolytic cleavage to 5'-phosphomonoester.. Its function is as follows. Endonuclease that specifically degrades the RNA of RNA-DNA hybrids. In Streptococcus thermophilus (strain CNRZ 1066), this protein is Ribonuclease HII.